A 486-amino-acid chain; its full sequence is O-methyltransferase gedA (486 aa).

Residues G298–G299, D321, S353–F354, and R369 contribute to the S-adenosyl-L-methionine site. H373 acts as the Proton acceptor in catalysis.

The protein belongs to the class I-like SAM-binding methyltransferase superfamily. Cation-independent O-methyltransferase family.

The enzyme catalyses emodin + S-adenosyl-L-methionine = questin + S-adenosyl-L-homocysteine + H(+). The protein operates within secondary metabolite biosynthesis. Functionally, O-methyltransferase; part of the gene cluster that mediates the biosynthesis of geodin, an intermediate in the biosynthesis of other natural products. The pathway begins with the synthesis of atrochrysone thioester by the polyketide synthase (PKS) gedC. The atrochrysone carboxyl ACP thioesterase gedB then breaks the thioester bond and releases the atrochrysone carboxylic acid from gedC. The atrochrysone carboxylic acid is then converted to atrochrysone which is further transformed into emodinanthrone. The next step is performed by the emodinanthrone oxygenase gedH that catalyzes the oxidation of emodinanthrone to emodin. Emodin O-methyltransferase encoded probably by gedA then catalyzes methylation of the 8-hydroxy group of emodin to form questin. Ring cleavage of questin by questin oxidase gedK leads to desmethylsulochrin via several intermediates including questin epoxide. Another methylation step probably catalyzed by methyltransferase gedG leads to the formation of sulochrin which is further converted to dihydrogeodin by the sulochrin halogenase gedL. Finally, the dihydrogeodin oxidase gedJ catalyzes the stereospecific phenol oxidative coupling reaction converting dihydrogeodin to geodin. The protein is O-methyltransferase gedA of Aspergillus terreus (strain NIH 2624 / FGSC A1156).